The chain runs to 549 residues: Hydroxylamine reductase (549 aa).

Cys-5, Cys-8, Cys-17, and Cys-23 together coordinate [4Fe-4S] cluster. Positions 243, 267, 311, 403, 431, 456, 491, and 493 each coordinate hybrid [4Fe-2O-2S] cluster. Cys-403 bears the Cysteine persulfide mark.

The protein belongs to the HCP family. It depends on [4Fe-4S] cluster as a cofactor. The cofactor is hybrid [4Fe-2O-2S] cluster.

The protein localises to the cytoplasm. It catalyses the reaction A + NH4(+) + H2O = hydroxylamine + AH2 + H(+). In terms of biological role, catalyzes the reduction of hydroxylamine to form NH(3) and H(2)O. In Desulfitobacterium hafniense (strain DSM 10664 / DCB-2), this protein is Hydroxylamine reductase.